Consider the following 467-residue polypeptide: Dimethylamine methyltransferase MtbB1 (467 aa).

Position 356 (pyrrolysine 356) is a non-standard amino acid, pyrrolysine.

It belongs to the dimethylamine methyltransferase family.

It catalyses the reaction Co(I)-[dimethylamine-specific corrinoid protein] + dimethylamine + H(+) = methyl-Co(III)-[dimethylamine-specific corrinoid protein] + methylamine. It functions in the pathway one-carbon metabolism; methanogenesis from dimethylamine. Catalyzes the transfer of a methyl group from dimethylamine to the corrinoid cofactor of MtbC. The sequence is that of Dimethylamine methyltransferase MtbB1 (mtbB1) from Methanosarcina barkeri (strain Fusaro / DSM 804).